The chain runs to 142 residues: Large ribosomal subunit protein uL11 (142 aa).

Belongs to the universal ribosomal protein uL11 family. Part of the ribosomal stalk of the 50S ribosomal subunit. Interacts with L10 and the large rRNA to form the base of the stalk. L10 forms an elongated spine to which L12 dimers bind in a sequential fashion forming a multimeric L10(L12)X complex. Post-translationally, one or more lysine residues are methylated.

In terms of biological role, forms part of the ribosomal stalk which helps the ribosome interact with GTP-bound translation factors. This Shewanella piezotolerans (strain WP3 / JCM 13877) protein is Large ribosomal subunit protein uL11.